The chain runs to 76 residues: Large ribosomal subunit protein eL20 (76 aa).

This sequence belongs to the eukaryotic ribosomal protein eL20 family. As to quaternary structure, part of the 50S ribosomal subunit. Binds 23S rRNA.

The chain is Large ribosomal subunit protein eL20 from Methanococcus vannielii (strain ATCC 35089 / DSM 1224 / JCM 13029 / OCM 148 / SB).